Consider the following 1416-residue polypeptide: 1-phosphatidylinositol 4,5-bisphosphate phosphodiesterase eta-2 (1416 aa).

A necessary for plasma membrane localization region spans residues 1 to 155 (MSGPWPSPDS…WVTGLRYLMA (155 aa)). The region spanning 47–155 (GAMQEGMQMV…WVTGLRYLMA (109 aa)) is the PH domain. EF-hand domains are found at residues 169-204 (TRDQWLKQTFDEADKNGDGSLSIGEVLQLLHKLNVN) and 205-241 (LPRQRVKQMFREADTDDHQGTLGFEEFCAFYKMMSTR). Ca(2+) contacts are provided by Asp-182, Asn-184, Asp-186, Ser-188, and Glu-193. One can recognise a PI-PLC X-box domain in the interval 326–471 (QDMTQPLSHY…LKGKILVKGK (146 aa)). Residue His-341 is part of the active site. Asn-342, Glu-371, and Asp-373 together coordinate Ca(2+). His-385 is an active-site residue. Position 420 (Glu-420) interacts with Ca(2+). Residues Lys-469 and Lys-471 each contribute to the substrate site. Residues Ser-487 and Ser-491 each carry the phosphoserine modification. Residues 535-620 (DPNNFSVSTL…RGATRQKKTM (86 aa)) are disordered. Residues 537–546 (NNFSVSTLSP) are compositionally biased toward polar residues. A compositionally biased stretch (basic residues) spans 581–592 (SRRKKKGSKLKK). 2 positions are modified to phosphoserine: Ser-595 and Ser-605. The PI-PLC Y-box domain maps to 626-740 (LSDLVKYTKS…GYVLKPGCMC (115 aa)). Residues Ser-653 and Arg-680 each contribute to the substrate site. Residues 740-869 (CQGVFNPNSE…PGYRHVYLEG (130 aa)) enclose the C2 domain. Ca(2+)-binding residues include Ile-784, Asp-786, Asp-810, Asp-839, His-840, and Asp-841. Disordered stretches follow at residues 905–1109 (GSLD…GGWR), 1121–1222 (YSDA…LQPR), and 1315–1405 (ITSP…GPAS). Positions 1011–1021 (APGPGPPPPAA) are enriched in pro residues. Polar residues predominate over residues 1073–1083 (GSQTDGRSQPR). Residues 1143–1166 (VSSSSSMSSSDTVIDLSLPSLGLG) are compositionally biased toward low complexity. Residues 1199–1208 (KSKSNPNLRA) show a composition bias toward polar residues. Gly residues predominate over residues 1324-1333 (AGEGVAGGPG).

The cofactor is Ca(2+). In terms of tissue distribution, expressed in retina and kidney.

The protein resides in the cytoplasm. The protein localises to the cell membrane. It carries out the reaction a 1,2-diacyl-sn-glycero-3-phospho-(1D-myo-inositol-4,5-bisphosphate) + H2O = 1D-myo-inositol 1,4,5-trisphosphate + a 1,2-diacyl-sn-glycerol + H(+). With respect to regulation, activity is stimulated by GNB1:GNG2. In terms of biological role, the production of the second messenger molecules diacylglycerol (DAG) and inositol 1,4,5-trisphosphate (IP3) is mediated by activated phosphatidylinositol-specific phospholipase C enzymes. This phospholipase activity is very sensitive to calcium. May be important for formation and maintenance of the neuronal network in the postnatal brain. In Homo sapiens (Human), this protein is 1-phosphatidylinositol 4,5-bisphosphate phosphodiesterase eta-2.